The chain runs to 104 residues: Urease subunit beta (104 aa).

This sequence belongs to the urease beta subunit family. Heterotrimer of UreA (gamma), UreB (beta) and UreC (alpha) subunits. Three heterotrimers associate to form the active enzyme.

It is found in the cytoplasm. The enzyme catalyses urea + 2 H2O + H(+) = hydrogencarbonate + 2 NH4(+). It functions in the pathway nitrogen metabolism; urea degradation; CO(2) and NH(3) from urea (urease route): step 1/1. The polypeptide is Urease subunit beta (Rhodopseudomonas palustris (strain BisB5)).